A 264-amino-acid chain; its full sequence is Thymidylate synthase (264 aa).

Arginine 21 lines the dUMP pocket. Histidine 51 is a (6R)-5,10-methylene-5,6,7,8-tetrahydrofolate binding site. 126 to 127 (RR) serves as a coordination point for dUMP. The active-site Nucleophile is cysteine 146. DUMP contacts are provided by residues 166-169 (RSCD), asparagine 177, and 207-209 (HLY). Aspartate 169 is a (6R)-5,10-methylene-5,6,7,8-tetrahydrofolate binding site. Position 263 (alanine 263) interacts with (6R)-5,10-methylene-5,6,7,8-tetrahydrofolate.

This sequence belongs to the thymidylate synthase family. Bacterial-type ThyA subfamily. Homodimer.

The protein resides in the cytoplasm. The enzyme catalyses dUMP + (6R)-5,10-methylene-5,6,7,8-tetrahydrofolate = 7,8-dihydrofolate + dTMP. Its pathway is pyrimidine metabolism; dTTP biosynthesis. Catalyzes the reductive methylation of 2'-deoxyuridine-5'-monophosphate (dUMP) to 2'-deoxythymidine-5'-monophosphate (dTMP) while utilizing 5,10-methylenetetrahydrofolate (mTHF) as the methyl donor and reductant in the reaction, yielding dihydrofolate (DHF) as a by-product. This enzymatic reaction provides an intracellular de novo source of dTMP, an essential precursor for DNA biosynthesis. The protein is Thymidylate synthase of Escherichia fergusonii (strain ATCC 35469 / DSM 13698 / CCUG 18766 / IAM 14443 / JCM 21226 / LMG 7866 / NBRC 102419 / NCTC 12128 / CDC 0568-73).